The primary structure comprises 642 residues: MPVITLPDGSQRHYDHAVSPMDVALDIGPGLAKACIAGRVNGELVDACDLIENDAQLSIITAKDEEGLEIIRHSCAHLLGHAIKQLWPHTKMAIGPVIDNGFYYDVDLDRTLTQEDVEALEKRMHELAEKNYDVIKKKVSWHEARETFANRGESYKVSILDENIAHDDKPGLYFHEEYVDMCRGPHVPNMRFCHHFKLMKTAGAYWRGDSNNKMLQRIYGTAWADKKALNAYLQRLEEAAKRDHRKIGKQLDLYHMQEEAPGMVFWHNDGWTIFRELEVFVRSKLKEYQYQEVKGPFMMDRVLWEKTGHWDNYKDAMFTTSSENREYCIKPMNCPGHVQIFNQGLKSYRDLPLRMAEFGSCHRNEPSGSLHGLMRVRGFTQDDAHIFCTEEQIRDEVNGCIRLVYDMYSTFGFEKIVVKLSTRPEKRIGSDEMWDRAEADLAVALEENNIPFEYQLGEGAFYGPKIEFTLYDCLDRAWQCGTVQLDFSLPSRLSASYVGEDNERKVPVMIHRAILGSMERFIGILTEEFAGFFPTWLAPVQVVIMNITDSQSEYVNELTQKLSNAGIRVKADLRNEKIGFKIREHTLRRVPYMLVCGDKEVESGKVAVRTRRGKDLGSMDVNEVIEKLQQEIRSRSLKQLEE.

Residues 1-61 (MPVITLPDGS…ENDAQLSIIT (61 aa)) form the TGS domain. Residues 243–534 (DHRKIGKQLD…LTEEFAGFFP (292 aa)) are catalytic. The residue at position 286 (K286) is an N6-acetyllysine. Residues C334, H385, and H511 each coordinate Zn(2+).

The protein belongs to the class-II aminoacyl-tRNA synthetase family. As to quaternary structure, homodimer. It depends on Zn(2+) as a cofactor.

Its subcellular location is the cytoplasm. The enzyme catalyses tRNA(Thr) + L-threonine + ATP = L-threonyl-tRNA(Thr) + AMP + diphosphate + H(+). Its function is as follows. Catalyzes the attachment of threonine to tRNA(Thr) in a two-step reaction: L-threonine is first activated by ATP to form Thr-AMP and then transferred to the acceptor end of tRNA(Thr). Also edits incorrectly charged L-seryl-tRNA(Thr). This Shigella flexneri serotype 5b (strain 8401) protein is Threonine--tRNA ligase.